The following is a 640-amino-acid chain: Threonine--tRNA ligase (640 aa).

A TGS domain is found at 1 to 61 (MPTITLPDGS…DSDATLQIIT (61 aa)). The interval 242–533 (DHRKIGKRLG…LIEHYEGAFP (292 aa)) is catalytic. Zn(2+)-binding residues include Cys333, His384, and His510.

The protein belongs to the class-II aminoacyl-tRNA synthetase family. As to quaternary structure, homodimer. Zn(2+) serves as cofactor.

It localises to the cytoplasm. The catalysed reaction is tRNA(Thr) + L-threonine + ATP = L-threonyl-tRNA(Thr) + AMP + diphosphate + H(+). Catalyzes the attachment of threonine to tRNA(Thr) in a two-step reaction: L-threonine is first activated by ATP to form Thr-AMP and then transferred to the acceptor end of tRNA(Thr). Also edits incorrectly charged L-seryl-tRNA(Thr). This chain is Threonine--tRNA ligase, found in Pseudomonas fluorescens (strain Pf0-1).